We begin with the raw amino-acid sequence, 197 residues long: NADH-quinone oxidoreductase subunit C (197 aa).

Belongs to the complex I 30 kDa subunit family. NDH-1 is composed of 14 different subunits. Subunits NuoB, C, D, E, F, and G constitute the peripheral sector of the complex.

The protein localises to the cell inner membrane. It catalyses the reaction a quinone + NADH + 5 H(+)(in) = a quinol + NAD(+) + 4 H(+)(out). NDH-1 shuttles electrons from NADH, via FMN and iron-sulfur (Fe-S) centers, to quinones in the respiratory chain. The immediate electron acceptor for the enzyme in this species is believed to be ubiquinone. Couples the redox reaction to proton translocation (for every two electrons transferred, four hydrogen ions are translocated across the cytoplasmic membrane), and thus conserves the redox energy in a proton gradient. This is NADH-quinone oxidoreductase subunit C from Neisseria meningitidis serogroup C (strain 053442).